Here is a 568-residue protein sequence, read N- to C-terminus: Peroxisomal leader peptide-processing protease (568 aa).

Residues 332–568 form a serine protease region; sequence TPRGLPLRDL…PLSEVPRSKL (237 aa). Catalysis depends on charge relay system residues His374, Asp410, and Ser483.

Belongs to the peptidase S1B family. As to quaternary structure, homodimer. Forms a heterodimer with the C-terminal cleavage product (49 kDa form). Forms a heterodimer with the N-terminal cleavage product (10 kDa form). Interacts with PEX5. Interacts with LONP2. In terms of processing, self-cleavage gives rise to an N-terminal 10-kDa fragment and C-terminal 49-kDa fragment upon import into the peroxisomes. The full-lengh TYSND1 is the active the proteolytic processing of PTS1- and PTS2-proteins and in self-cleavage, and intermolecular self-cleavage of TYSND1 down-regulates its protease activity.

It localises to the peroxisome. With respect to regulation, inhibited by N-ethylmaleimide (NEM). Not affected by leupeptin or trans-epoxysuccinyl-l-leucylamido-(4-gianidino) butane (E64). Its function is as follows. Peroxisomal protease that mediates both the removal of the leader peptide from proteins containing a PTS2 target sequence and processes several PTS1-containing proteins. Catalyzes the processing of PTS1-proteins involved in the peroxisomal beta-oxidation of fatty acids. This chain is Peroxisomal leader peptide-processing protease (Tysnd1), found in Mus musculus (Mouse).